A 100-amino-acid chain; its full sequence is MANVTDPRDIILSPVISEKSYGLIEDNVYTFIVAPDSNKTQIKIAIEKIFKVKVDSVNTANRPGKRKRTRTGFGQRKATKRAIVTLAAGSKPIDLFGAPA.

It belongs to the universal ribosomal protein uL23 family. As to quaternary structure, part of the 50S ribosomal subunit. Contacts protein L29, and trigger factor when it is bound to the ribosome.

In terms of biological role, one of the early assembly proteins it binds 23S rRNA. One of the proteins that surrounds the polypeptide exit tunnel on the outside of the ribosome. Forms the main docking site for trigger factor binding to the ribosome. The polypeptide is Large ribosomal subunit protein uL23 (Mycolicibacterium vanbaalenii (strain DSM 7251 / JCM 13017 / BCRC 16820 / KCTC 9966 / NRRL B-24157 / PYR-1) (Mycobacterium vanbaalenii)).